The chain runs to 170 residues: Lipoprotein signal peptidase (170 aa).

3 consecutive transmembrane segments (helical) span residues 5-25 (IVGV…KAYA), 62-82 (SNLI…VLFV), and 89-111 (STIC…LRFG). Catalysis depends on residues Asp-115 and Asp-133. The helical transmembrane segment at 126 to 146 (WPAFNFADVCVTCGVICFLCL) threads the bilayer.

Belongs to the peptidase A8 family.

Its subcellular location is the cell inner membrane. It catalyses the reaction Release of signal peptides from bacterial membrane prolipoproteins. Hydrolyzes -Xaa-Yaa-Zaa-|-(S,diacylglyceryl)Cys-, in which Xaa is hydrophobic (preferably Leu), and Yaa (Ala or Ser) and Zaa (Gly or Ala) have small, neutral side chains.. It functions in the pathway protein modification; lipoprotein biosynthesis (signal peptide cleavage). This protein specifically catalyzes the removal of signal peptides from prolipoproteins. This is Lipoprotein signal peptidase from Anaplasma marginale (strain Florida).